We begin with the raw amino-acid sequence, 290 residues long: Eukaryotic translation initiation factor 3 subunit G (290 aa).

The tract at residues M1 to G34 is disordered. Positions A210–R288 constitute an RRM domain.

This sequence belongs to the eIF-3 subunit G family. As to quaternary structure, component of the eukaryotic translation initiation factor 3 (eIF-3) complex.

The protein resides in the cytoplasm. In terms of biological role, RNA-binding component of the eukaryotic translation initiation factor 3 (eIF-3) complex, which is involved in protein synthesis of a specialized repertoire of mRNAs and, together with other initiation factors, stimulates binding of mRNA and methionyl-tRNAi to the 40S ribosome. The eIF-3 complex specifically targets and initiates translation of a subset of mRNAs involved in cell proliferation. This subunit can bind 18S rRNA. The sequence is that of Eukaryotic translation initiation factor 3 subunit G from Neosartorya fischeri (strain ATCC 1020 / DSM 3700 / CBS 544.65 / FGSC A1164 / JCM 1740 / NRRL 181 / WB 181) (Aspergillus fischerianus).